We begin with the raw amino-acid sequence, 254 residues long: DNA-3-methyladenine glycosylase (254 aa).

Residues 1–10 (MKTPARRSKR) show a composition bias toward basic residues. The interval 1–20 (MKTPARRSKRVNQEESETNV) is disordered.

This sequence belongs to the DNA glycosylase MPG family.

The protein localises to the nucleus. The enzyme catalyses Hydrolysis of alkylated DNA, releasing 3-methyladenine, 3-methylguanine, 7-methylguanine and 7-methyladenine.. Functionally, hydrolysis of the deoxyribose N-glycosidic bond to excise 3-methyladenine, and 7-methylguanine from the damaged DNA polymer formed by alkylation lesions. This chain is DNA-3-methyladenine glycosylase (MAG), found in Arabidopsis thaliana (Mouse-ear cress).